A 1507-amino-acid chain; its full sequence is ABC multidrug transporter SNQ2 (1507 aa).

A disordered region spans residues 1 to 73; sequence MSSSSEISVA…RSSTAELSPE (73 aa). The segment covering 41-55 has biased composition (basic and acidic residues); the sequence is RSHEDADGDDAHSDN. N-linked (GlcNAc...) asparagine glycosylation is found at Asn-55 and Asn-336. Residues 157 to 412 form the ABC transporter 1 domain; sequence CLPYTIYKAI…FYRMGYECPP (256 aa). The next 3 helical transmembrane spans lie at 522–542, 556–576, and 605–625; these read AYTV…GSLY, GGVL…NLSF, and FPFR…LSGL. Residue Asn-626 is glycosylated (N-linked (GlcNAc...) asparagine). The helical transmembrane segment at 635-655 threads the bilayer; it reads VYLFLTMCSESINALFELIAA. A glycan (N-linked (GlcNAc...) asparagine) is linked at Asn-659. Transmembrane regions (helical) follow at residues 665–685 and 773–793; these read SISG…IQLP and FGIM…ITEI. The region spanning 857–1099 is the ABC transporter 2 domain; the sequence is FIWRNVCYTI…LLSYFERNGA (243 aa). Residue Asn-878 is glycosylated (N-linked (GlcNAc...) asparagine). 893 to 900 lines the ATP pocket; the sequence is GESGAGKT. 3 helical membrane passes run 1193–1213, 1220–1240, and 1270–1290; these read YIMS…FTFY, TGLQ…APAM, and LITQ…IFFV. Asn-1311 is a glycosylation site (N-linked (GlcNAc...) asparagine). The next 2 membrane-spanning stretches (helical) occupy residues 1314–1334 and 1339–1359; these read IMFQ…APNL and VILG…QPVS. N-linked (GlcNAc...) asparagine glycosylation is present at Asn-1428. The helical transmembrane segment at 1459-1479 threads the bilayer; sequence FGLYWAYIGFNICAMVAIYYI.

It belongs to the ABC transporter superfamily. ABCG family. PDR (TC 3.A.1.205) subfamily.

The protein localises to the cell membrane. Its function is as follows. ABC multidrug transporter involved in the response to azoles such as fluconazole, itraconazole, ketoconazole and voriconazole and contributes to the development of PDR1-dependent azole resistance. Plays a role in biofilm tolerance to fluconazole. Also confers resistance to 4-nitroquinoline-N-oxide (4-NQO). In Candida glabrata (strain ATCC 2001 / BCRC 20586 / JCM 3761 / NBRC 0622 / NRRL Y-65 / CBS 138) (Yeast), this protein is ABC multidrug transporter SNQ2.